Here is a 220-residue protein sequence, read N- to C-terminus: Probable septum site-determining protein MinC (220 aa).

The protein belongs to the MinC family. In terms of assembly, interacts with MinD and FtsZ.

Functionally, cell division inhibitor that blocks the formation of polar Z ring septums. Rapidly oscillates between the poles of the cell to destabilize FtsZ filaments that have formed before they mature into polar Z rings. Prevents FtsZ polymerization. The chain is Probable septum site-determining protein MinC from Vibrio vulnificus (strain CMCP6).